Consider the following 159-residue polypeptide: Carbohydrate sulfotransferase 15 (159 aa).

Over 1-159 (SGTTDFYRRI…YQPHNERLVK (159 aa)) the chain is Lumenal. Asn42 and Asn112 each carry an N-linked (GlcNAc...) asparagine glycan.

Belongs to the sulfotransferase 1 family. A divalent metal cation serves as cofactor. The cofactor is glutathione.

Its subcellular location is the golgi apparatus membrane. It carries out the reaction dermatan 4'-sulfate + n 3'-phosphoadenylyl sulfate = dermatan 4',6'-bissulfate + n adenosine 3',5'-bisphosphate + n H(+). The catalysed reaction is chondroitin 4'-sulfate + n 3'-phosphoadenylyl sulfate = chondroitin 4',6'-bissulfate + n adenosine 3',5'-bisphosphate + n H(+). Sulfotransferase that transfers sulfate from 3'-phosphoadenosine 5'-phosphosulfate (PAPS) to the C-6 hydroxyl group of the GalNAc 4-sulfate residue of chondroitin sulfate A and forms chondroitin sulfate E containing GlcA-GalNAc(4,6-SO(4)) repeating units. The polypeptide is Carbohydrate sulfotransferase 15 (GALNAC4S6ST) (Nototodarus sloanii (Wellington flying squid)).